Consider the following 592-residue polypeptide: A-type ATP synthase subunit A (592 aa).

233-240 (GPFGSGKT) is an ATP binding site.

The protein belongs to the ATPase alpha/beta chains family. In terms of assembly, has multiple subunits with at least A(3), B(3), C, D, E, F, H, I and proteolipid K(x).

The protein resides in the cell membrane. It catalyses the reaction ATP + H2O + 4 H(+)(in) = ADP + phosphate + 5 H(+)(out). Component of the A-type ATP synthase that produces ATP from ADP in the presence of a proton gradient across the membrane. The A chain is the catalytic subunit. The protein is A-type ATP synthase subunit A of Saccharolobus islandicus (strain M.16.27) (Sulfolobus islandicus).